A 384-amino-acid polypeptide reads, in one-letter code: Dual-specificity RNA methyltransferase RlmN (384 aa).

The active-site Proton acceptor is Glu-105. In terms of domain architecture, Radical SAM core spans 111-350 (EDDRATLCVS…TIVRKTRGDD (240 aa)). The cysteines at positions 118 and 355 are disulfide-linked. [4Fe-4S] cluster contacts are provided by Cys-125, Cys-129, and Cys-132. Residues 179–180 (GE), Ser-211, 233–235 (SLH), and Asn-312 each bind S-adenosyl-L-methionine. The active-site S-methylcysteine intermediate is the Cys-355.

It belongs to the radical SAM superfamily. RlmN family. The cofactor is [4Fe-4S] cluster.

The protein localises to the cytoplasm. It carries out the reaction adenosine(2503) in 23S rRNA + 2 reduced [2Fe-2S]-[ferredoxin] + 2 S-adenosyl-L-methionine = 2-methyladenosine(2503) in 23S rRNA + 5'-deoxyadenosine + L-methionine + 2 oxidized [2Fe-2S]-[ferredoxin] + S-adenosyl-L-homocysteine. The catalysed reaction is adenosine(37) in tRNA + 2 reduced [2Fe-2S]-[ferredoxin] + 2 S-adenosyl-L-methionine = 2-methyladenosine(37) in tRNA + 5'-deoxyadenosine + L-methionine + 2 oxidized [2Fe-2S]-[ferredoxin] + S-adenosyl-L-homocysteine. In terms of biological role, specifically methylates position 2 of adenine 2503 in 23S rRNA and position 2 of adenine 37 in tRNAs. m2A2503 modification seems to play a crucial role in the proofreading step occurring at the peptidyl transferase center and thus would serve to optimize ribosomal fidelity. The chain is Dual-specificity RNA methyltransferase RlmN from Escherichia fergusonii (strain ATCC 35469 / DSM 13698 / CCUG 18766 / IAM 14443 / JCM 21226 / LMG 7866 / NBRC 102419 / NCTC 12128 / CDC 0568-73).